A 30-amino-acid chain; its full sequence is LIM and SH3 domain protein 1 (30 aa).

M1 bears the N-acetylmethionine mark. An LIM zinc-binding domain is found at 5–30 (CARCGKIVYPTEKVNCLDKFWHKACF).

As to quaternary structure, interacts with F-actin. Interacts with ANKRD54. Interacts with KBTBD10. Post-translationally, phosphorylated.

Its subcellular location is the cytoplasm. The protein localises to the cell cortex. It localises to the cytoskeleton. Its function is as follows. Plays an important role in the regulation of dynamic actin-based, cytoskeletal activities. Agonist-dependent changes in LASP1 phosphorylation may also serve to regulate actin-associated ion transport activities, not only in the parietal cell but also in certain other F-actin-rich secretory epithelial cell types. The sequence is that of LIM and SH3 domain protein 1 (LASP1) from Sus scrofa (Pig).